The sequence spans 252 residues: Hydroxyacylglutathione hydrolase (252 aa).

7 residues coordinate Zn(2+): histidine 54, histidine 56, aspartate 58, histidine 59, histidine 113, aspartate 132, and histidine 170.

This sequence belongs to the metallo-beta-lactamase superfamily. Glyoxalase II family. Monomer. The cofactor is Zn(2+).

It carries out the reaction an S-(2-hydroxyacyl)glutathione + H2O = a 2-hydroxy carboxylate + glutathione + H(+). It participates in secondary metabolite metabolism; methylglyoxal degradation; (R)-lactate from methylglyoxal: step 2/2. Functionally, thiolesterase that catalyzes the hydrolysis of S-D-lactoyl-glutathione to form glutathione and D-lactic acid. This chain is Hydroxyacylglutathione hydrolase, found in Thermosynechococcus vestitus (strain NIES-2133 / IAM M-273 / BP-1).